The primary structure comprises 922 residues: MVQLRKLLRVLTLMKFPCCVLEVLLCALAAAARGQEMYAPHSIRIEGDVTLGGLFPVHAKGPSGVPCGDIKRENGIHRLEAMLYALDQINSDPNLLPNVTLGARILDTCSRDTYALEQSLTFVQALIQKDTSDVRCTNGEPPVFVKPEKVVGVIGASGSSVSIMVANILRLFQIPQISYASTAPGLSDDRRYDFFSRVVPPDSFQAQAMVDIVKALGWNYVSTLASEGSYGEKGVESFTRISKEAGGLCIAQSVRIPQERKDRTIDFDRIIKQLLDTPNSRAVVIFANDEDIKQILAAAKRADQVGHFLWVGSDSWGSKINPLHQHEDIAEGAITIQPKRATVEGFDAYFTSRTLENNRRNVWFAEYWEENFNCKLTIGGSKKEDTDRKCTGQERIGKDSNYEQEGKVQFVIDAVYAMAHALHHMNKDLCADYRGVCPEMEQAGGKKLLKYIRNVNFNGSAGTPVMFNKNGDAPGRYDIFQYQTTNTSNPGYRLIGQWTDELQLNIEDMQWGKGVREIPPSVCTLPCKPGQRKKTQKGTPCCWTCEPCDGYQYQFDEMTCQHCPYDQRPNENRTGCQDIPIIKLEWHSPWAVIPVFLAMLGIIATIFVMATFIRYNDTPIVRASGRELSYVLLTGIFLCYIITFLMIAKPDVAVCSFRRVFLGLGMCISYAALLTKTNRIYRIFEQGKKSVTAPRLISPTSQLAITSSLISVQLLGVFIWFGVDPPNIIIDYDEHKTMNPEQARGVLKCDITDLQIICSLGYSILLMVTCTVYAIKTRGVPENFNEAKPIGFTMYTTCIVWLAFIPIFFGTAQSAEKLYIQTTTLTISMNLSASVALGMLYMPKVYIIIFHPELNVQKRKRSFKAVVTAATMSSRLSHKPSDRPNGEAKTELCENVDPNNCIPPVRKSVQKSVTWYTIPPTV.

A signal peptide spans 1–34; the sequence is MVQLRKLLRVLTLMKFPCCVLEVLLCALAAAARG. Residues 35–590 lie on the Extracellular side of the membrane; that stretch reads QEMYAPHSIR…IIKLEWHSPW (556 aa). Cys67 and Cys109 are oxidised to a cystine. Residue Asn98 is glycosylated (N-linked (GlcNAc...) asparagine). Residues Ser159, 180–182, Tyr230, and Asp314 contribute to the L-glutamate site; that span reads AST. Intrachain disulfides connect Cys249–Cys541, Cys374–Cys390, Cys430–Cys437, Cys523–Cys542, Cys527–Cys545, Cys548–Cys560, and Cys563–Cys576. Lys407 serves as a coordination point for L-glutamate. N-linked (GlcNAc...) asparagine glycans are attached at residues Asn458 and Asn486. An N-linked (GlcNAc...) asparagine glycan is attached at Asn572. Residues 591 to 615 form a helical membrane-spanning segment; it reads AVIPVFLAMLGIIATIFVMATFIRY. At 616–627 the chain is on the cytoplasmic side; it reads NDTPIVRASGRE. A helical membrane pass occupies residues 628–648; it reads LSYVLLTGIFLCYIITFLMIA. Residues 649–654 lie on the Extracellular side of the membrane; the sequence is KPDVAV. A helical transmembrane segment spans residues 655 to 675; it reads CSFRRVFLGLGMCISYAALLT. The Cytoplasmic portion of the chain corresponds to 676–702; sequence KTNRIYRIFEQGKKSVTAPRLISPTSQ. Residues 703–723 form a helical membrane-spanning segment; that stretch reads LAITSSLISVQLLGVFIWFGV. Over 724-753 the chain is Extracellular; that stretch reads DPPNIIIDYDEHKTMNPEQARGVLKCDITD. The chain crosses the membrane as a helical span at residues 754–775; sequence LQIICSLGYSILLMVTCTVYAI. Topologically, residues 776-788 are cytoplasmic; the sequence is KTRGVPENFNEAK. Residues 789 to 810 form a helical membrane-spanning segment; it reads PIGFTMYTTCIVWLAFIPIFFG. Residues 811 to 825 lie on the Extracellular side of the membrane; it reads TAQSAEKLYIQTTTL. Residues 826–850 form a helical membrane-spanning segment; the sequence is TISMNLSASVALGMLYMPKVYIIIF. Residues 851 to 922 lie on the Cytoplasmic side of the membrane; it reads HPELNVQKRK…VTWYTIPPTV (72 aa).

It belongs to the G-protein coupled receptor 3 family. In terms of assembly, homodimer. Interacts with PICK1.

Its subcellular location is the cell membrane. In terms of biological role, G-protein coupled receptor activated by glutamate that regulates axon outgrowth through the MAPK-cAMP-PKA signaling pathway during neuronal development. Ligand binding causes a conformation change that triggers signaling via guanine nucleotide-binding proteins (G proteins) and modulates the activity of downstream effectors, such as adenylate cyclase that it inhibits. The chain is Metabotropic glutamate receptor 7 (GRM7) from Pongo abelii (Sumatran orangutan).